Reading from the N-terminus, the 128-residue chain is MKRREAREKALQALFQIELNEMSLDQAIKNIMEDEQDDYMEKLVEGVMANKAEIDAIIEPNLDNWRMDRLSKVDLSLLRLSVYEINYLDDVPNRVSLNESIEIAKIYSDEKSSKFINGVLANIAPEDK.

It belongs to the NusB family.

Functionally, involved in transcription antitermination. Required for transcription of ribosomal RNA (rRNA) genes. Binds specifically to the boxA antiterminator sequence of the ribosomal RNA (rrn) operons. This Listeria welshimeri serovar 6b (strain ATCC 35897 / DSM 20650 / CCUG 15529 / CIP 8149 / NCTC 11857 / SLCC 5334 / V8) protein is Transcription antitermination protein NusB.